Consider the following 296-residue polypeptide: Bifunctional protein FolD (296 aa).

NADP(+) contacts are provided by residues 166-168 (GRS), S195, and T236.

Belongs to the tetrahydrofolate dehydrogenase/cyclohydrolase family. As to quaternary structure, homodimer.

The catalysed reaction is (6R)-5,10-methylene-5,6,7,8-tetrahydrofolate + NADP(+) = (6R)-5,10-methenyltetrahydrofolate + NADPH. It catalyses the reaction (6R)-5,10-methenyltetrahydrofolate + H2O = (6R)-10-formyltetrahydrofolate + H(+). It participates in one-carbon metabolism; tetrahydrofolate interconversion. Its function is as follows. Catalyzes the oxidation of 5,10-methylenetetrahydrofolate to 5,10-methenyltetrahydrofolate and then the hydrolysis of 5,10-methenyltetrahydrofolate to 10-formyltetrahydrofolate. This is Bifunctional protein FolD from Dehalococcoides mccartyi (strain ATCC BAA-2266 / KCTC 15142 / 195) (Dehalococcoides ethenogenes (strain 195)).